The chain runs to 3859 residues: Transformation/transcription domain-associated protein (3859 aa).

Ala-2 carries the N-acetylalanine modification. The segment covering Pro-491–Pro-526 has biased composition (pro residues). Residues Pro-491–Phe-541 are disordered. Residues Lys-529 to Gln-539 are compositionally biased toward basic and acidic residues. Ser-1628 is modified (phosphoserine). Residues Ser-2010–Thr-2388 are interaction with TP53. The disordered stretch occupies residues Asp-2023–Ser-2044. The span at Asn-2033–Ser-2044 shows a compositional bias: low complexity. The Bipartite nuclear localization signal signature appears at Lys-2047–Arg-2062. Phosphoserine occurs at positions 2051 and 2077. Lys-2543 is covalently cross-linked (Glycyl lysine isopeptide (Lys-Gly) (interchain with G-Cter in SUMO2)). The span at Lys-2543–Ser-2554 shows a compositional bias: basic and acidic residues. The interval Lys-2543 to Glu-2578 is disordered. The 584-residue stretch at Val-2692–Thr-3275 folds into the FAT domain. Lys-3078 is modified (N6-acetyllysine). Positions Met-3500–His-3823 constitute a PI3K/PI4K catalytic domain. Positions Val-3506–Ala-3512 are G-loop. Residues His-3687 to Met-3695 are catalytic loop. An activation loop region spans residues Val-3707 to Thr-3732. The FATC domain maps to Gln-3827–Leu-3859.

This sequence belongs to the PI3/PI4-kinase family. TRA1 subfamily. Interacts with MYC, E2F1 and E2F4 transcription factors. Interacts directly with p53/TP53. Interacts with GCN5L2. Component of various HAT complexes. Component of the PCAF complex, at least composed of TADA2L/ADA2, SUPT3H, TADA3L/ADA3, TAF5L/PAF65-beta, TAF6L/PAF65-alpha, TAF10/TAFII30, TAF12/TAFII20, TAF9/TAFII31 and TRRAP. Component of the TFTC-HAT complex, at least composed of TAF5L, TAF6L, TADA3L, SUPT3H/SPT3, TAF2/TAFII150, TAF4/TAFII135, TAF5/TAFII100, GCN5L2/GCN5, TAF10 and TRRAP. Component of the NuA4 histone acetyltransferase complex which contains the catalytic subunit KAT5/TIP60 and the subunits EP400, TRRAP/PAF400, BRD8/SMAP, EPC1, DMAP1/DNMAP1, RUVBL1/TIP49, RUVBL2, ING3, actin, ACTL6A/BAF53A, MORF4L1/MRG15, MORF4L2/MRGX, MRGBP, YEATS4/GAS41, VPS72/YL1 and MEAF6. Component of the STAGA complex, at least composed of SUPT3H, GCN5L2, SUPT7L, TAF5L, TAF6L, TADA3L, TAD1L, TAF10, TAF12, TRRAP and TAF9. The STAGA core complex is associated with a subcomplex required for histone deubiquitination composed of ATXN7L3, ENY2 and USP22. Component of the BAF53 complex, at least composed of BAF53A, RUVBL1, SMARCA4/BRG1, and TRRAP, which preferentially acetylates histone H4 (and H2A) within nucleosomes. Interacts with NPAT. Interaction with TELO2 and TTI1. Component of a SWR1-like complex.

The protein localises to the nucleus. Adapter protein, which is found in various multiprotein chromatin complexes with histone acetyltransferase activity (HAT), which gives a specific tag for epigenetic transcription activation. Component of the NuA4 histone acetyltransferase complex which is responsible for acetylation of nucleosomal histones H4 and H2A. Plays a central role in MYC transcription activation, and also participates in cell transformation by MYC. Required for p53/TP53-, E2F1- and E2F4-mediated transcription activation. Also involved in transcription activation mediated by the adenovirus E1A, a viral oncoprotein that deregulates transcription of key genes. Probably acts by linking transcription factors such as E1A, MYC or E2F1 to HAT complexes such as STAGA thereby allowing transcription activation. Probably not required in the steps following histone acetylation in processes of transcription activation. May be required for the mitotic checkpoint and normal cell cycle progression. Component of a SWR1-like complex that specifically mediates the removal of histone H2A.Z/H2AZ1 from the nucleosome. May play a role in the formation and maintenance of the auditory system. This is Transformation/transcription domain-associated protein (TRRAP) from Homo sapiens (Human).